The primary structure comprises 352 residues: Alanine racemase (352 aa).

K33 (proton acceptor; specific for D-alanine) is an active-site residue. Residue K33 is modified to N6-(pyridoxal phosphate)lysine. R129 serves as a coordination point for substrate. Y250 serves as the catalytic Proton acceptor; specific for L-alanine. A substrate-binding site is contributed by M298.

This sequence belongs to the alanine racemase family. Requires pyridoxal 5'-phosphate as cofactor.

It carries out the reaction L-alanine = D-alanine. Its pathway is amino-acid biosynthesis; D-alanine biosynthesis; D-alanine from L-alanine: step 1/1. Its function is as follows. Catalyzes the interconversion of L-alanine and D-alanine. May also act on other amino acids. This chain is Alanine racemase (alr), found in Neisseria meningitidis serogroup A / serotype 4A (strain DSM 15465 / Z2491).